The chain runs to 429 residues: Glutamate-1-semialdehyde 2,1-aminomutase 2 (429 aa).

Residue K268 is modified to N6-(pyridoxal phosphate)lysine.

Belongs to the class-III pyridoxal-phosphate-dependent aminotransferase family. HemL subfamily. In terms of assembly, homodimer. Requires pyridoxal 5'-phosphate as cofactor.

It localises to the cytoplasm. The enzyme catalyses (S)-4-amino-5-oxopentanoate = 5-aminolevulinate. It participates in porphyrin-containing compound metabolism; protoporphyrin-IX biosynthesis; 5-aminolevulinate from L-glutamyl-tRNA(Glu): step 2/2. The polypeptide is Glutamate-1-semialdehyde 2,1-aminomutase 2 (Bacillus thuringiensis (strain Al Hakam)).